The primary structure comprises 526 residues: Efflux pump aunC (526 aa).

14 helical membrane passes run 23-43 (LCYK…CTSL), 64-84 (DVGW…LPFG), 89-109 (FFPI…GSFI), 125-145 (VAGL…TQCV), 155-175 (GFIM…GGAF), 183-203 (WCFY…FFTF), 218-238 (AAGL…CLLL), 254-274 (IIAL…LQLW), 296-316 (LYGF…PIWF), 339-359 (VIFA…GPFM), 360-380 (LLSA…HPSS), 386-406 (IGYQ…PVFV), 418-438 (TATA…VSVA), and 491-511 (VHTF…ATVI).

Belongs to the major facilitator superfamily. TCR/Tet family.

The protein resides in the cell membrane. Efflux pump; part of the gene cluster that mediates the biosynthesis of aurasperone B, a dimeric gamma-naphthopyrone. The chain is Efflux pump aunC from Aspergillus niger (strain ATCC 1015 / CBS 113.46 / FGSC A1144 / LSHB Ac4 / NCTC 3858a / NRRL 328 / USDA 3528.7).